The primary structure comprises 153 residues: Cell division protein SepF (153 aa).

It belongs to the SepF family. In terms of assembly, homodimer. Interacts with FtsZ.

It localises to the cytoplasm. In terms of biological role, cell division protein that is part of the divisome complex and is recruited early to the Z-ring. Probably stimulates Z-ring formation, perhaps through the cross-linking of FtsZ protofilaments. Its function overlaps with FtsA. This chain is Cell division protein SepF, found in Clostridium tetani (strain Massachusetts / E88).